Here is a 428-residue protein sequence, read N- to C-terminus: Phosphomethylpyrimidine synthase 2 (428 aa).

Substrate-binding positions include Met94, Tyr123, His162, 184–186 (SRG), 225–228 (NGMR), and Glu264. His268 contributes to the Zn(2+) binding site. Substrate is bound at residue Tyr291. His332 is a binding site for Zn(2+). The [4Fe-4S] cluster site is built by Cys408, Cys411, and Cys415.

The protein belongs to the ThiC family. [4Fe-4S] cluster serves as cofactor.

The catalysed reaction is 5-amino-1-(5-phospho-beta-D-ribosyl)imidazole + S-adenosyl-L-methionine = 4-amino-2-methyl-5-(phosphooxymethyl)pyrimidine + CO + 5'-deoxyadenosine + formate + L-methionine + 3 H(+). The protein operates within cofactor biosynthesis; thiamine diphosphate biosynthesis. Functionally, catalyzes the synthesis of the hydroxymethylpyrimidine phosphate (HMP-P) moiety of thiamine from aminoimidazole ribotide (AIR) in a radical S-adenosyl-L-methionine (SAM)-dependent reaction. This Methanosarcina mazei (strain ATCC BAA-159 / DSM 3647 / Goe1 / Go1 / JCM 11833 / OCM 88) (Methanosarcina frisia) protein is Phosphomethylpyrimidine synthase 2.